Here is a 610-residue protein sequence, read N- to C-terminus: Chaperone protein DnaK (610 aa).

A Phosphothreonine; by autocatalysis modification is found at threonine 173. Over residues 579–592 (QQQQAQGANAGQNN) the composition is skewed to low complexity. The segment at 579-610 (QQQQAQGANAGQNNDSTVEDAEFKEVKDDDKK) is disordered. Residues 599 to 610 (AEFKEVKDDDKK) show a composition bias toward basic and acidic residues.

This sequence belongs to the heat shock protein 70 family.

Functionally, acts as a chaperone. In Staphylococcus aureus (strain bovine RF122 / ET3-1), this protein is Chaperone protein DnaK.